We begin with the raw amino-acid sequence, 396 residues long: Pyruvate dehydrogenase E1 component subunit alpha type I, mitochondrial (396 aa).

The transit peptide at 1–25 (MIFVFANIFKVPTVSPSVMAISVRL) directs the protein to the mitochondrion. Positions 88, 114, 115, 153, 161, 163, 192, 193, 194, 221, and 223 each coordinate pyruvate. Residues Tyr114 and Arg115 each contribute to the thiamine diphosphate site. Thiamine diphosphate-binding residues include Gly161, Val163, Asp192, Gly193, Ala194, and Asn221. A Mg(2+)-binding site is contributed by Asp192. Mg(2+)-binding residues include Asn221 and Tyr223. His288 serves as a coordination point for thiamine diphosphate. Phosphoserine occurs at positions 289 and 296.

In terms of assembly, heterotetramer of two PDHA1 and two PDHB subunits. The heterotetramer interacts with DLAT, and is part of the multimeric pyruvate dehydrogenase complex that contains multiple copies of pyruvate dehydrogenase (E1), dihydrolipoamide acetyltransferase (DLAT, E2) and lipoamide dehydrogenase (DLD, E3). The cofactor is thiamine diphosphate. Mg(2+) is required as a cofactor.

Its subcellular location is the mitochondrion matrix. The enzyme catalyses N(6)-[(R)-lipoyl]-L-lysyl-[protein] + pyruvate + H(+) = N(6)-[(R)-S(8)-acetyldihydrolipoyl]-L-lysyl-[protein] + CO2. With respect to regulation, pyruvate dehydrogenase activity is inhibited by phosphorylation of PDHA1; it is reactivated by dephosphorylation. Its function is as follows. The pyruvate dehydrogenase complex catalyzes the overall conversion of pyruvate to acetyl-CoA and CO(2), and thereby links the glycolytic pathway to the tricarboxylic cycle. The protein is Pyruvate dehydrogenase E1 component subunit alpha type I, mitochondrial of Ascaris suum (Pig roundworm).